The following is a 214-amino-acid chain: Guanylate kinase (214 aa).

One can recognise a Guanylate kinase-like domain in the interval 6 to 192 (GTLYIISAPS…ALEDLKAIFR (187 aa)). 13 to 20 (APSGAGKT) is an ATP binding site.

Belongs to the guanylate kinase family.

It localises to the cytoplasm. The enzyme catalyses GMP + ATP = GDP + ADP. Its function is as follows. Essential for recycling GMP and indirectly, cGMP. This Pseudomonas syringae pv. syringae (strain B728a) protein is Guanylate kinase.